A 71-amino-acid polypeptide reads, in one-letter code: Protein CYSTEINE-RICH TRANSMEMBRANE MODULE 4 (71 aa).

The span at Met1–Ala12 shows a compositional bias: polar residues. Positions Met1–Tyr31 are disordered. Residues Pro14–Gly30 show a composition bias toward pro residues. Residues Ser48–Cys64 form a helical membrane-spanning segment.

It belongs to the CYSTM1 family. In terms of assembly, heterodimers. Interacts with CYSTM6, CYSTM7, CYSTM12 and WIH1/CYSTM13. As to expression, mostly expressed in roots, stems, rosette leaves and siliques and, to a lower extent, in flowers and cauline leaves.

The protein resides in the cell membrane. The protein localises to the cytoplasm. Its function is as follows. Involved in resistance to abiotic stress. This is Protein CYSTEINE-RICH TRANSMEMBRANE MODULE 4 from Arabidopsis thaliana (Mouse-ear cress).